The sequence spans 427 residues: Chaperone SurA (427 aa).

Residues methionine 1–alanine 19 form the signal peptide. PpiC domains lie at threonine 170–aspartate 268 and valine 277–aspartate 377.

The protein localises to the periplasm. The catalysed reaction is [protein]-peptidylproline (omega=180) = [protein]-peptidylproline (omega=0). In terms of biological role, chaperone involved in the correct folding and assembly of outer membrane proteins. Recognizes specific patterns of aromatic residues and the orientation of their side chains, which are found more frequently in integral outer membrane proteins. May act in both early periplasmic and late outer membrane-associated steps of protein maturation. The sequence is that of Chaperone SurA from Vibrio parahaemolyticus serotype O3:K6 (strain RIMD 2210633).